A 406-amino-acid polypeptide reads, in one-letter code: Cysteine desulfurase (406 aa).

K226 is modified (N6-(pyridoxal phosphate)lysine). The active-site Cysteine persulfide intermediate is C364.

It belongs to the class-V pyridoxal-phosphate-dependent aminotransferase family. Csd subfamily. In terms of assembly, homodimer. Interacts with SufE and the SufBCD complex composed of SufB, SufC and SufD. The interaction with SufE is required to mediate the direct transfer of the sulfur atom from the S-sulfanylcysteine. The cofactor is pyridoxal 5'-phosphate.

The protein resides in the cytoplasm. It carries out the reaction (sulfur carrier)-H + L-cysteine = (sulfur carrier)-SH + L-alanine. The enzyme catalyses L-selenocysteine + AH2 = hydrogenselenide + L-alanine + A + H(+). It functions in the pathway cofactor biosynthesis; iron-sulfur cluster biosynthesis. Cysteine desulfurases mobilize the sulfur from L-cysteine to yield L-alanine, an essential step in sulfur metabolism for biosynthesis of a variety of sulfur-containing biomolecules. Component of the suf operon, which is activated and required under specific conditions such as oxidative stress and iron limitation. Acts as a potent selenocysteine lyase in vitro, that mobilizes selenium from L-selenocysteine. Selenocysteine lyase activity is however unsure in vivo. This chain is Cysteine desulfurase, found in Escherichia coli O6:K15:H31 (strain 536 / UPEC).